Consider the following 1323-residue polypeptide: DNA-directed RNA polymerase subunit beta' (1323 aa).

Zn(2+) is bound by residues cysteine 60, cysteine 62, cysteine 75, and cysteine 78. Mg(2+)-binding residues include aspartate 535, aspartate 537, and aspartate 539. Cysteine 894, cysteine 977, cysteine 984, and cysteine 987 together coordinate Zn(2+).

Belongs to the RNA polymerase beta' chain family. The RNAP catalytic core consists of 2 alpha, 1 beta, 1 beta' and 1 omega subunit. When a sigma factor is associated with the core the holoenzyme is formed, which can initiate transcription. Mg(2+) serves as cofactor. The cofactor is Zn(2+).

The catalysed reaction is RNA(n) + a ribonucleoside 5'-triphosphate = RNA(n+1) + diphosphate. Its function is as follows. DNA-dependent RNA polymerase catalyzes the transcription of DNA into RNA using the four ribonucleoside triphosphates as substrates. The polypeptide is DNA-directed RNA polymerase subunit beta' (Corynebacterium urealyticum (strain ATCC 43042 / DSM 7109)).